The following is a 196-amino-acid chain: Cilia- and flagella-associated protein 107 (196 aa).

2 mn regions span residues 46-61 and 96-108; these read TPQTIYRKEYVPFPGH and ISTYDDHYNRHNY. Residues 168 to 196 are disordered; it reads YPRPPAGAMSRREHAIPVPPPRLQPVPHF. Over residues 184–196 the composition is skewed to pro residues; it reads PVPPPRLQPVPHF.

As to quaternary structure, microtubule inner protein component of sperm flagellar doublet microtubules. Expressed in trachea multiciliated cells.

It is found in the cytoplasm. It localises to the cytoskeleton. Its subcellular location is the cilium axoneme. The protein resides in the flagellum axoneme. Functionally, microtubule inner protein (MIP) part of the dynein-decorated doublet microtubules (DMTs) in cilia axoneme, which is required for motile cilia beating. This is Cilia- and flagella-associated protein 107 from Bos taurus (Bovine).